The chain runs to 74 residues: Mu-conotoxin-like T3.1 (74 aa).

The signal sequence occupies residues 1–19 (MSKLGVLLTICLLLFPLTA). Positions 20-74 (LPMDGDEPADRPAERMQDNISSEQHPLFEERHGCCKGPEGCSSRECRPQHCCGRR) are excised as a propeptide. Intrachain disulfides connect C53/C65, C54/C70, and C60/C71. 4-hydroxyproline is present on P57. E58 and E64 each carry 4-carboxyglutamate. Position 67 is a 4-hydroxyproline (P67). C71 carries the post-translational modification Cysteine amide.

It belongs to the conotoxin M superfamily. Expressed by the venom duct.

Its subcellular location is the secreted. Its function is as follows. Mu-conotoxins block voltage-gated sodium channels (Nav). In vitro, this synthetic peptide displays a low blocking effect in mouse extensor digitorum longus muscles (IC(50)=616 nM). This is Mu-conotoxin-like T3.1 from Conus tulipa (Fish-hunting cone snail).